Consider the following 450-residue polypeptide: Phosphoglucosamine mutase (450 aa).

The active-site Phosphoserine intermediate is the Ser-102. Residues Ser-102, Asp-243, Asp-245, and Asp-247 each contribute to the Mg(2+) site. Ser-102 bears the Phosphoserine mark.

This sequence belongs to the phosphohexose mutase family. It depends on Mg(2+) as a cofactor. In terms of processing, activated by phosphorylation.

The enzyme catalyses alpha-D-glucosamine 1-phosphate = D-glucosamine 6-phosphate. Catalyzes the conversion of glucosamine-6-phosphate to glucosamine-1-phosphate. The sequence is that of Phosphoglucosamine mutase from Rhizobium rhizogenes (strain K84 / ATCC BAA-868) (Agrobacterium radiobacter).